We begin with the raw amino-acid sequence, 297 residues long: GTP cyclohydrolase FolE2 (297 aa).

2 disordered regions span residues 1-21 (MTHASALGLTQHIPDTQSERD) and 180-207 (IRAELMEPPGDRRRPPPPGGGESTRERP).

It belongs to the GTP cyclohydrolase IV family.

It carries out the reaction GTP + H2O = 7,8-dihydroneopterin 3'-triphosphate + formate + H(+). It functions in the pathway cofactor biosynthesis; 7,8-dihydroneopterin triphosphate biosynthesis; 7,8-dihydroneopterin triphosphate from GTP: step 1/1. Converts GTP to 7,8-dihydroneopterin triphosphate. The polypeptide is GTP cyclohydrolase FolE2 (Methylibium petroleiphilum (strain ATCC BAA-1232 / LMG 22953 / PM1)).